We begin with the raw amino-acid sequence, 588 residues long: Aspartate--tRNA ligase (588 aa).

Residue glutamate 172 participates in L-aspartate binding. Residues 196–199 (QLFK) form an aspartate region. Residue arginine 218 coordinates L-aspartate. ATP-binding positions include 218 to 220 (RDE) and glutamine 227. Histidine 449 serves as a coordination point for L-aspartate. Glutamate 483 provides a ligand contact to ATP. Position 490 (arginine 490) interacts with L-aspartate. 535 to 538 (GLDR) provides a ligand contact to ATP.

It belongs to the class-II aminoacyl-tRNA synthetase family. Type 1 subfamily. As to quaternary structure, homodimer.

It localises to the cytoplasm. It catalyses the reaction tRNA(Asp) + L-aspartate + ATP = L-aspartyl-tRNA(Asp) + AMP + diphosphate. Catalyzes the attachment of L-aspartate to tRNA(Asp) in a two-step reaction: L-aspartate is first activated by ATP to form Asp-AMP and then transferred to the acceptor end of tRNA(Asp). The sequence is that of Aspartate--tRNA ligase from Pasteurella multocida (strain Pm70).